The primary structure comprises 127 residues: Large ribosomal subunit protein bL17 (127 aa).

It belongs to the bacterial ribosomal protein bL17 family. As to quaternary structure, part of the 50S ribosomal subunit. Contacts protein L32.

This is Large ribosomal subunit protein bL17 from Enterococcus faecalis (strain ATCC 700802 / V583).